The sequence spans 196 residues: GTP cyclohydrolase-2 (196 aa).

49-53 serves as a coordination point for GTP; it reads RVHSE. Positions 54, 65, and 67 each coordinate Zn(2+). GTP contacts are provided by residues glutamine 70, 92–94, and threonine 114; that span reads EGR. The active-site Proton acceptor is aspartate 126. Arginine 128 serves as the catalytic Nucleophile. GTP is bound by residues threonine 149 and lysine 154.

This sequence belongs to the GTP cyclohydrolase II family. In terms of assembly, homodimer. The cofactor is Zn(2+).

The enzyme catalyses GTP + 4 H2O = 2,5-diamino-6-hydroxy-4-(5-phosphoribosylamino)-pyrimidine + formate + 2 phosphate + 3 H(+). The protein operates within cofactor biosynthesis; riboflavin biosynthesis; 5-amino-6-(D-ribitylamino)uracil from GTP: step 1/4. In terms of biological role, catalyzes the conversion of GTP to 2,5-diamino-6-ribosylamino-4(3H)-pyrimidinone 5'-phosphate (DARP), formate and pyrophosphate. This Salmonella choleraesuis (strain SC-B67) protein is GTP cyclohydrolase-2.